The sequence spans 283 residues: Urease accessory protein UreD (283 aa).

It belongs to the UreD family. In terms of assembly, ureD, UreF and UreG form a complex that acts as a GTP-hydrolysis-dependent molecular chaperone, activating the urease apoprotein by helping to assemble the nickel containing metallocenter of UreC. The UreE protein probably delivers the nickel.

It is found in the cytoplasm. Required for maturation of urease via the functional incorporation of the urease nickel metallocenter. In Rhodopseudomonas palustris (strain BisB5), this protein is Urease accessory protein UreD.